We begin with the raw amino-acid sequence, 858 residues long: Protein VACUOLELESS1 (858 aa).

This sequence belongs to the VPS16 family. Core component of at least two putative endosomal tethering complexes, the homotypic fusion and vacuole protein sorting (HOPS) complex and the class C core vacuole/endosome tethering (CORVET) complex. Their common core is composed of the class C Vps proteins VPS11, VCL1, VPS18 and VPS33, which in HOPS further associates with VPS39 and VPS41 and in CORVET with VPS3. In terms of tissue distribution, expressed in roots, leaves, stems, siliques, flowers and mature pollen.

It is found in the vacuole membrane. It localises to the prevacuolar compartment membrane. Functionally, required for vacuole biogenesis and vacuole enlargment in dividing and expanding cells. Involved in the docking or fusion of prevacuolar vesicles. Important for the function of both male and female gametophytes, but is not essential for the germination and development of pollen. This is Protein VACUOLELESS1 (VCL1) from Arabidopsis thaliana (Mouse-ear cress).